Reading from the N-terminus, the 529-residue chain is Glycerol kinase 5 (529 aa).

Residues serine 28 and serine 29 each contribute to the ATP site. Residues arginine 98, aspartate 275, and glutamine 276 each coordinate glycerol. Threonine 297, glycine 340, and glycine 440 together coordinate ATP.

The protein belongs to the FGGY kinase family.

The protein localises to the cytoplasm. It catalyses the reaction glycerol + ATP = sn-glycerol 3-phosphate + ADP + H(+). It functions in the pathway polyol metabolism; glycerol degradation via glycerol kinase pathway; sn-glycerol 3-phosphate from glycerol: step 1/1. Skin-specific kinase that plays a key role in glycerol metabolism, catalyzing its phosphorylation to produce sn-glycerol 3-phosphate. Involved in skin-specific regulation of sterol regulatory element-binding protein (SREBP) processing and lipid biosynthesis. This Homo sapiens (Human) protein is Glycerol kinase 5.